A 771-amino-acid chain; its full sequence is DNA helicase/primase complex-associated protein (771 aa).

It belongs to the herpesviridae HEPA family. As to quaternary structure, associates with the primase and the helicase to form the helicase-primase complex. Interacts with the origin-binding protein. Interacts with the polymerase catalytic subunit.

The protein localises to the host nucleus. In terms of biological role, component of the helicase/primase complex. Unwinds the DNA at the replication forks and generates single-stranded DNA for both leading and lagging strand synthesis. The primase synthesizes short RNA primers on the lagging strand that the polymerase presumably elongates using dNTPs. The primase-associated factor has no known catalytic activity in the complex and may serve to facilitate the formation of the replisome by directly interacting with the origin-binding protein and the polymerase. The sequence is that of DNA helicase/primase complex-associated protein from Varicella-zoster virus (strain Oka vaccine) (HHV-3).